Consider the following 521-residue polypeptide: Cytochrome b5 reductase 4 (521 aa).

M1 carries the N-acetylmethionine modification. A compositionally biased stretch (polar residues) spans M1 to V18. The tract at residues M1–P27 is disordered. In terms of domain architecture, Cytochrome b5 heme-binding spans L54–A130. H89 and H112 together coordinate heme. In terms of domain architecture, CS spans P165–G256. Residues L273–S385 form the FAD-binding FR-type domain. Residues D365–G380 and D392–L424 contribute to the FAD site.

The protein belongs to the flavoprotein pyridine nucleotide cytochrome reductase family. Requires FAD as cofactor. In terms of tissue distribution, widely expressed.

The protein resides in the endoplasmic reticulum. It catalyses the reaction 2 Fe(III)-[cytochrome b5] + NADH = 2 Fe(II)-[cytochrome b5] + NAD(+) + H(+). Functionally, NADH-cytochrome b5 reductase involved in endoplasmic reticulum stress response pathway. Plays a critical role in protecting pancreatic beta-cells against oxidant stress, possibly by protecting the cell from excess buildup of reactive oxygen species (ROS). Reduces a variety of substrates in vitro, such as cytochrome c, feericyanide and methemoglobin. This chain is Cytochrome b5 reductase 4, found in Homo sapiens (Human).